The sequence spans 1018 residues: UPF0182 protein Tfu_0541 (1018 aa).

The next 7 membrane-spanning stretches (helical) occupy residues 20-40 (LAPV…AANF), 64-84 (ALLF…SVYF), 115-135 (VFFW…ATAE), 171-191 (VIIG…VVVH), 212-232 (VHLS…YWLE), 254-274 (AVLY…VLFF), and 287-307 (VSLG…PAIV). 2 disordered regions span residues 497 to 570 (YPVD…QANN) and 939 to 965 (GDEA…ASSD). 2 stretches are compositionally biased toward acidic residues: residues 542–560 (QDQE…EEEQ) and 939–959 (GDEA…EEEQ).

Belongs to the UPF0182 family.

It is found in the cell membrane. The sequence is that of UPF0182 protein Tfu_0541 from Thermobifida fusca (strain YX).